A 598-amino-acid chain; its full sequence is NADH-quinone oxidoreductase subunit C/D (598 aa).

The interval 1-189 is NADH dehydrogenase I subunit C; sequence MTDSTTHDRE…DPFELTRQKQ (189 aa). The segment at 213–598 is NADH dehydrogenase I subunit D; it reads DFMFLNLGPN…IDFVMSDVDR (386 aa).

The protein in the N-terminal section; belongs to the complex I 30 kDa subunit family. This sequence in the C-terminal section; belongs to the complex I 49 kDa subunit family. NDH-1 is composed of 13 different subunits. Subunits NuoB, CD, E, F, and G constitute the peripheral sector of the complex.

The protein resides in the cell inner membrane. It carries out the reaction a quinone + NADH + 5 H(+)(in) = a quinol + NAD(+) + 4 H(+)(out). NDH-1 shuttles electrons from NADH, via FMN and iron-sulfur (Fe-S) centers, to quinones in the respiratory chain. The immediate electron acceptor for the enzyme in this species is believed to be ubiquinone. Couples the redox reaction to proton translocation (for every two electrons transferred, four hydrogen ions are translocated across the cytoplasmic membrane), and thus conserves the redox energy in a proton gradient. The protein is NADH-quinone oxidoreductase subunit C/D of Edwardsiella ictaluri (strain 93-146).